The following is a 687-amino-acid chain: Ferric transport system permease protein FbpB (687 aa).

19 helical membrane passes run 10-30 (LFES…ALPS), 50-70 (GWSS…FWLL), 85-105 (LGLI…YKVS), 106-126 (MGYS…FAFA), 141-161 (LLSI…AIFI), 192-212 (LFLS…FALY), 226-246 (IFSI…VTLM), 271-291 (GFNG…FMIL), 318-338 (YNII…IVFI), 347-367 (PLVL…YIAG), 378-398 (LGSM…MWIG), 425-445 (IIVM…SIFY), 450-472 (VNWG…QGLS), 484-504 (IYAG…AYIV), 517-537 (FLTM…YILA), 538-558 (FNDA…SMVM), 594-614 (IWFI…VTSF), 620-640 (TVSA…AYIL), and 649-669 (GVAI…ILFF). Residues 188–393 (ISNSLFLSGF…IFSLLIFIVQ (206 aa)) enclose the ABC transmembrane type-1 1 domain. Positions 479-669 (LINTMIYAGI…VVMMAIILFF (191 aa)) constitute an ABC transmembrane type-1 2 domain.

Belongs to the binding-protein-dependent transport system permease family. FbpB subfamily. The complex is composed of two ATP-binding proteins (FbpC), two transmembrane proteins (FbpB) and a solute-binding protein (FbpA).

It localises to the cell inner membrane. Its function is as follows. Part of the ABC transporter complex FbpABC (TC 3.A.1.10.1) involved in Fe(3+) ions import. Probably responsible for the translocation of the substrate across the membrane. This chain is Ferric transport system permease protein FbpB (fbpB), found in Actinobacillus pleuropneumoniae (Haemophilus pleuropneumoniae).